The sequence spans 115 residues: NADH-ubiquinone oxidoreductase chain 3 (115 aa).

3 helical membrane-spanning segments follow: residues 3–23 (FMLTLLTNTLLALLLVTIAFW), 55–75 (FFLVAITFLLFDLEIALLLPL), and 84–104 (LEVMLTTALLLISLLAISLAY).

The protein belongs to the complex I subunit 3 family. In terms of assembly, core subunit of respiratory chain NADH dehydrogenase (Complex I) which is composed of 45 different subunits. Interacts with TMEM186. Interacts with TMEM242.

It localises to the mitochondrion inner membrane. The catalysed reaction is a ubiquinone + NADH + 5 H(+)(in) = a ubiquinol + NAD(+) + 4 H(+)(out). Core subunit of the mitochondrial membrane respiratory chain NADH dehydrogenase (Complex I) which catalyzes electron transfer from NADH through the respiratory chain, using ubiquinone as an electron acceptor. Essential for the catalytic activity of complex I. The protein is NADH-ubiquinone oxidoreductase chain 3 of Rhinolophus pumilus (Horseshoe bat).